Reading from the N-terminus, the 65-residue chain is Beta-toxin Tf4a (65 aa).

Residues 2 to 63 (KEGYPADSKG…VWDSATNKCG (62 aa)) enclose the LCN-type CS-alpha/beta domain. 4 disulfides stabilise this stretch: Cys-12-Cys-62, Cys-16-Cys-38, Cys-24-Cys-43, and Cys-28-Cys-45. Cys-62 carries the cysteine amide modification.

Belongs to the long (4 C-C) scorpion toxin superfamily. Sodium channel inhibitor family. Alpha subfamily. In terms of tissue distribution, expressed by the venom gland.

It is found in the secreted. Its function is as follows. Alpha toxins bind voltage-independently at site-3 of sodium channels (Nav) and inhibit the inactivation of the activated channels, thereby blocking neuronal transmission. This toxin is toxic to frogs but non-toxic to insect larvae (T.molitor), mammals (rats) and crustaceans (crabs) at the doses assayed. The polypeptide is Beta-toxin Tf4a (Tityus fasciolatus (Central Brazilian scorpion)).